The chain runs to 85 residues: ATP synthase subunit 9, mitochondrial (85 aa).

2 consecutive transmembrane segments (helical) span residues 19-39 (IGAGAATIALAGAAIGIGNVF) and 61-81 (ILGFALTEAIALFALMMAFLI).

This sequence belongs to the ATPase C chain family. As to quaternary structure, F-type ATPases have 2 components, CF(1) - the catalytic core - and CF(0) - the membrane proton channel. CF(1) has five subunits: alpha(3), beta(3), gamma(1), delta(1), epsilon(1). CF(0) has three main subunits: a, b and c.

The protein resides in the mitochondrion membrane. This protein is one of the chains of the nonenzymatic membrane component (F0) of mitochondrial ATPase. The chain is ATP synthase subunit 9, mitochondrial (ATP9) from Arabidopsis thaliana (Mouse-ear cress).